The chain runs to 440 residues: Ribosomal protein uS12 methylthiotransferase RimO (440 aa).

The 117-residue stretch at 1–117 folds into the MTTase N-terminal domain; it reads MKVHLTSLGC…VIEAVAGKES (117 aa). C10, C46, C80, C155, C159, and C162 together coordinate [4Fe-4S] cluster. One can recognise a Radical SAM core domain in the interval 141–371; it reads CATPHTVYVK…MTAQIDISSR (231 aa). The region spanning 374–440 is the TRAM domain; the sequence is AKRVGSREPV…SAYDLTGEAQ (67 aa).

The protein belongs to the methylthiotransferase family. RimO subfamily. [4Fe-4S] cluster serves as cofactor.

Its subcellular location is the cytoplasm. The catalysed reaction is L-aspartate(89)-[ribosomal protein uS12]-hydrogen + (sulfur carrier)-SH + AH2 + 2 S-adenosyl-L-methionine = 3-methylsulfanyl-L-aspartate(89)-[ribosomal protein uS12]-hydrogen + (sulfur carrier)-H + 5'-deoxyadenosine + L-methionine + A + S-adenosyl-L-homocysteine + 2 H(+). Functionally, catalyzes the methylthiolation of an aspartic acid residue of ribosomal protein uS12. The chain is Ribosomal protein uS12 methylthiotransferase RimO from Desulfosudis oleivorans (strain DSM 6200 / JCM 39069 / Hxd3) (Desulfococcus oleovorans).